The primary structure comprises 337 residues: Glyceraldehyde-3-phosphate dehydrogenase 1, cytosolic (337 aa).

The tract at residues 1–151 (MGKIKIGING…YTSDVNIVSN (151 aa)) is binding to NAD. NAD(+)-binding positions include 13 to 14 (RI), D35, and R82. Residues 152 to 337 (ASCTTNCLAP…DLIRHMFKTQ (186 aa)) are catalytic. Residues 153–155 (SCT), T184, 213–214 (TG), and R236 contribute to the D-glyceraldehyde 3-phosphate site. The active-site Nucleophile is the C154. N318 lines the NAD(+) pocket.

The protein belongs to the glyceraldehyde-3-phosphate dehydrogenase family. In terms of assembly, homotetramer.

The protein localises to the cytoplasm. It catalyses the reaction D-glyceraldehyde 3-phosphate + phosphate + NAD(+) = (2R)-3-phospho-glyceroyl phosphate + NADH + H(+). It participates in carbohydrate degradation; glycolysis; pyruvate from D-glyceraldehyde 3-phosphate: step 1/5. In terms of biological role, key enzyme in glycolysis that catalyzes the first step of the pathway by converting D-glyceraldehyde 3-phosphate (G3P) into 3-phospho-D-glyceroyl phosphate. Essential for the maintenance of cellular ATP levels and carbohydrate metabolism. This Zea mays (Maize) protein is Glyceraldehyde-3-phosphate dehydrogenase 1, cytosolic (GAPC1).